Reading from the N-terminus, the 40-residue chain is Snaclec tokaracetin subunit beta (40 aa).

An intrachain disulfide couples Cys-2 to Cys-13. Positions 9–40 (YDEHCYRVFQQKMNWEDAEKFCTQQHKGXHLX) constitute a C-type lectin domain.

It belongs to the snaclec family. As to quaternary structure, heterodimer of subunits alpha and beta; disulfide-linked. As to expression, expressed by the venom gland.

Its subcellular location is the secreted. Platelet antagonist that specifically and reversibly binds to a site on platelet glycoprotein Ibalpha (GP1BA) close to or identical with the site for vWF binding. It inhibits the binding of vWF to platelets and vWF-dependent shear-induced platelet aggregation. In Protobothrops tokarensis (Tokara habu), this protein is Snaclec tokaracetin subunit beta.